We begin with the raw amino-acid sequence, 396 residues long: Chalcone synthase A (396 aa).

Cysteine 170 is an active-site residue.

Belongs to the thiolase-like superfamily. Chalcone/stilbene synthases family.

The enzyme catalyses (E)-4-coumaroyl-CoA + 3 malonyl-CoA + 3 H(+) = 2',4,4',6'-tetrahydroxychalcone + 3 CO2 + 4 CoA. The protein operates within secondary metabolite biosynthesis; flavonoid biosynthesis. In terms of biological role, the primary product of this enzyme is 4,2',4',6'-tetrahydroxychalcone (also termed naringenin-chalcone or chalcone) which can under specific conditions spontaneously isomerize into naringenin. The protein is Chalcone synthase A (CHSA) of Ipomoea purpurea (Common morning glory).